The sequence spans 463 residues: Fumarate hydratase class II (463 aa).

Residues 95–97, 126–129, 136–138, and Thr184 each bind substrate; these read SGT, HPND, and SSN. The active-site Proton donor/acceptor is His185. Residue Ser315 is part of the active site. Residues Ser316 and 321–323 contribute to the substrate site; that span reads KIN.

This sequence belongs to the class-II fumarase/aspartase family. Fumarase subfamily. As to quaternary structure, homotetramer.

Its subcellular location is the cytoplasm. It carries out the reaction (S)-malate = fumarate + H2O. It participates in carbohydrate metabolism; tricarboxylic acid cycle; (S)-malate from fumarate: step 1/1. Functionally, involved in the TCA cycle. Catalyzes the stereospecific interconversion of fumarate to L-malate. The sequence is that of Fumarate hydratase class II from Chlamydia muridarum (strain MoPn / Nigg).